Consider the following 458-residue polypeptide: MFDVIVKNCRLVSSDGITEADILVKDGKVAAISADTSDVEASRTIDAGGKFVMPGVVDEHVHIIDMDLKNRYGRFELDSESAAVGGITTIIEMPITFPPTTTLDAFLEKKKQAGQRLKVDFALYGGGVPGNLPEIRKMHDAGAVGFKSMMAASVPGMFDAVSDGELFEIFQEIAACGSVIVVHAENETIIQALQKQIKAAGGKDMAAYEASQPVFQENEAIQRALLLQKEAGCRLIVLHVSNPDGVELIHQAQSEGQDVHCESGPQYLNITTDDAERIGPYMKVAPPVRSAEMNIRLWEQLENGLIDTLGSDHGGHPVEDKEPGWKDVWKAGNGALGLETSLPMMLTNGVNKGRLSLERLVEVMCEKPAKLFGIYPQKGTLQVGSDADLLILDLDIDTKVDASQFRSLHKYSPFDGMPVTGAPVLTMVRGTVVAEKGEVLVEQGFGQFVTRRNYEASK.

Zn(2+) is bound by residues His60, His62, Lys147, His183, His239, and Asp312. Lys147 is subject to N6-carboxylysine.

As to quaternary structure, homotetramer. Zn(2+) serves as cofactor. Post-translationally, carboxylation allows a single lysine to coordinate two zinc ions.

In terms of biological role, rather more predominant for the cleavage of aryl- than for alkyl-hydantoin derivatives. The stereoselectivity of this enzyme depends on the substrate used for bioconversion: strictly L-selective for the cleavage of D,L-5-indolylmethylhydantoin, but D-selective for the hydrolysis of D,L-methylthioethylhydantoin. This Paenarthrobacter aurescens (Arthrobacter aurescens) protein is L-hydantoinase (lhyD).